The sequence spans 36 residues: Pancreatic polypeptide (36 aa).

Tyr36 carries the tyrosine amide modification.

It belongs to the NPY family.

The protein resides in the secreted. Hormone secreted by pancreatic cells that acts as a regulator of pancreatic and gastrointestinal functions probably by signaling through the G protein-coupled receptor NPY4R2. The protein is Pancreatic polypeptide (PPY) of Didelphis virginiana (North American opossum).